We begin with the raw amino-acid sequence, 235 residues long: Small ribosomal subunit protein uS2 (235 aa).

It belongs to the universal ribosomal protein uS2 family.

This is Small ribosomal subunit protein uS2 from Geobacillus sp. (strain WCH70).